Here is a 371-residue protein sequence, read N- to C-terminus: Hsc70-interacting protein (371 aa).

The tract at residues 38–80 (MGGKVPPATHKAKSEENTKEEKRDKTTEENIKTEELSSEESDL) is disordered. Residues 49–72 (AKSEENTKEEKRDKTTEENIKTEE) show a composition bias toward basic and acidic residues. TPR repeat units lie at residues 113 to 146 (ANEKKGAAIEALNDGELQKAIDLFTDAIKLNPRL), 147 to 180 (AILYAKRASVFVKLQKPNAAIRDCDRAIEINPDS), and 181 to 214 (AQPYKWRGKAHRLLGHWEEAAHDLALACKLDYDE). A compositionally biased stretch (basic and acidic residues) spans 255 to 271 (KAREEHERAQREEEARR). The segment at 255–296 (KAREEHERAQREEEARRQSGSQYGSFPGGFPGGMPGNFPGGM) is disordered. Gly residues predominate over residues 280–296 (FPGGFPGGMPGNFPGGM). The region spanning 321-360 (DPEVLAAMQDPEVMVAFQDVAQNPSNMSKYQSNPKVMNLI) is the STI1 domain. Position 348 is a phosphoserine; by GRK5 (Ser348). 2 positions are modified to N6-acetyllysine: Lys355 and Lys362.

It belongs to the FAM10 family. As to quaternary structure, homotetramer. Interacts with HSC70 as well as DNAJ homologs and HSP90. Interacts (via the C-terminus 302- 318 AA) with GRK5.

Its subcellular location is the cytoplasm. One HIP oligomer binds the ATPase domains of at least two HSC70 molecules dependent on activation of the HSC70 ATPase by HSP40. Stabilizes the ADP state of HSC70 that has a high affinity for substrate protein. Through its own chaperone activity, it may contribute to the interaction of HSC70 with various target proteins. This Mus musculus (Mouse) protein is Hsc70-interacting protein (St13).